Consider the following 558-residue polypeptide: CTP synthase (558 aa).

Residues 1-267 form an amidoligase domain region; that stretch reads MAKFVFVTGG…CLEMLDVLNL (267 aa). S13 provides a ligand contact to CTP. A UTP-binding site is contributed by S13. ATP contacts are provided by residues 14–19 and D71; that span reads SIGKGI. Mg(2+) is bound by residues D71 and E141. Residues 148-150, 188-193, and K224 contribute to the CTP site; these read DIE and KTKPTQ. Residues 188–193 and K224 each bind UTP; that span reads KTKPTQ. In terms of domain architecture, Glutamine amidotransferase type-1 spans 292 to 534; the sequence is KVALVGKYVQ…IEAAQLRLPA (243 aa). G354 contacts L-glutamine. Catalysis depends on C381, which acts as the Nucleophile; for glutamine hydrolysis. L-glutamine contacts are provided by residues 382-385, E405, and R462; that span reads LGMQ. Catalysis depends on residues H507 and E509. The segment at 536–558 is disordered; sequence PDEALRRQSQTNISAQEKPSRIG. The span at 542–552 shows a compositional bias: polar residues; it reads RQSQTNISAQE.

It belongs to the CTP synthase family. As to quaternary structure, homotetramer.

The catalysed reaction is UTP + L-glutamine + ATP + H2O = CTP + L-glutamate + ADP + phosphate + 2 H(+). It carries out the reaction L-glutamine + H2O = L-glutamate + NH4(+). The enzyme catalyses UTP + NH4(+) + ATP = CTP + ADP + phosphate + 2 H(+). The protein operates within pyrimidine metabolism; CTP biosynthesis via de novo pathway; CTP from UDP: step 2/2. With respect to regulation, allosterically activated by GTP, when glutamine is the substrate; GTP has no effect on the reaction when ammonia is the substrate. The allosteric effector GTP functions by stabilizing the protein conformation that binds the tetrahedral intermediate(s) formed during glutamine hydrolysis. Inhibited by the product CTP, via allosteric rather than competitive inhibition. Its function is as follows. Catalyzes the ATP-dependent amination of UTP to CTP with either L-glutamine or ammonia as the source of nitrogen. Regulates intracellular CTP levels through interactions with the four ribonucleotide triphosphates. This chain is CTP synthase, found in Prochlorococcus marinus (strain MIT 9303).